Reading from the N-terminus, the 561-residue chain is DNA ligase B (561 aa).

Lys128 acts as the N6-AMP-lysine intermediate in catalysis.

This sequence belongs to the NAD-dependent DNA ligase family. LigB subfamily.

It catalyses the reaction NAD(+) + (deoxyribonucleotide)n-3'-hydroxyl + 5'-phospho-(deoxyribonucleotide)m = (deoxyribonucleotide)n+m + AMP + beta-nicotinamide D-nucleotide.. Functionally, catalyzes the formation of phosphodiester linkages between 5'-phosphoryl and 3'-hydroxyl groups in double-stranded DNA using NAD as a coenzyme and as the energy source for the reaction. This Pseudomonas syringae pv. tomato (strain ATCC BAA-871 / DC3000) protein is DNA ligase B.